The following is a 470-amino-acid chain: Homogentisate 1,2-dioxygenase (470 aa).

Fe cation contacts are provided by His356, Glu362, and His392.

This sequence belongs to the homogentisate dioxygenase family. Fe cation serves as cofactor.

It catalyses the reaction homogentisate + O2 = 4-maleylacetoacetate + H(+). It functions in the pathway amino-acid degradation; L-phenylalanine degradation; acetoacetate and fumarate from L-phenylalanine: step 4/6. This Oryza sativa subsp. japonica (Rice) protein is Homogentisate 1,2-dioxygenase (HGO).